Reading from the N-terminus, the 437-residue chain is tRNA(Ile)-lysidine synthase (437 aa).

22-27 lines the ATP pocket; that stretch reads SGGLDS.

This sequence belongs to the tRNA(Ile)-lysidine synthase family.

The protein resides in the cytoplasm. The catalysed reaction is cytidine(34) in tRNA(Ile2) + L-lysine + ATP = lysidine(34) in tRNA(Ile2) + AMP + diphosphate + H(+). Functionally, ligates lysine onto the cytidine present at position 34 of the AUA codon-specific tRNA(Ile) that contains the anticodon CAU, in an ATP-dependent manner. Cytidine is converted to lysidine, thus changing the amino acid specificity of the tRNA from methionine to isoleucine. This Xylella fastidiosa (strain Temecula1 / ATCC 700964) protein is tRNA(Ile)-lysidine synthase.